The chain runs to 127 residues: Longitudinals lacking protein-like (127 aa).

The BTB domain occupies 33–98 (TDVTLACEGQ…MYAGEVNVSQ (66 aa)).

As to quaternary structure, the BTB domain interacts with the BTB domain of Trl in vitro. Found in a Pc-containing complex.

Its subcellular location is the nucleus. Functionally, required, together with Trl, for maintaining the repressed state of target genes including homeotic genes Scr and Ubx. May also be involved in the activation of homeotic genes. Binds to a DNA Polycomb response element (PRE) at the bithorax complex. Also binds to polytene chromosomes at several hundred sites, many of which are shared with Trl and ph-p. Required during embryonic development. The protein is Longitudinals lacking protein-like of Drosophila melanogaster (Fruit fly).